The sequence spans 103 residues: MYAVIKTGGKQYKVAVGEKLKVEQIPADIDAEITLDQVLAVGEGESIKFGTPLVSGASVKATVVSHGRHAKVTIFKMRRRKHYQKHGGHRQNYTELRIDAINA.

This sequence belongs to the bacterial ribosomal protein bL21 family. As to quaternary structure, part of the 50S ribosomal subunit. Contacts protein L20.

This protein binds to 23S rRNA in the presence of protein L20. This chain is Large ribosomal subunit protein bL21, found in Burkholderia ambifaria (strain MC40-6).